Consider the following 220-residue polypeptide: PKHD-type hydroxylase sync_1544 (220 aa).

The 95-residue stretch at 79 to 173 (KLHRFLISKT…RTVCVGWIES (95 aa)) folds into the Fe2OG dioxygenase domain. Residues His97, Asp99, and His154 each coordinate Fe cation. A 2-oxoglutarate-binding site is contributed by Arg164.

Fe(2+) serves as cofactor. The cofactor is L-ascorbate.

This is PKHD-type hydroxylase sync_1544 from Synechococcus sp. (strain CC9311).